Reading from the N-terminus, the 312-residue chain is Pimeloyl-[acyl-carrier protein] methyl ester esterase (312 aa).

Positions 17 to 241 constitute an AB hydrolase-1 domain; it reads VYLIHGWGAN…KAAHAPFLSH (225 aa). Substrate contacts are provided by residues tryptophan 23, 83–84, and 145–149; these read SL and FLQLQ. Serine 83 (nucleophile) is an active-site residue. Residues aspartate 207 and histidine 235 contribute to the active site. Substrate is bound at residue histidine 235.

Belongs to the AB hydrolase superfamily. Carboxylesterase BioH family. As to quaternary structure, monomer.

Its subcellular location is the cytoplasm. The catalysed reaction is 6-carboxyhexanoyl-[ACP] methyl ester + H2O = 6-carboxyhexanoyl-[ACP] + methanol + H(+). Its pathway is cofactor biosynthesis; biotin biosynthesis. In terms of biological role, the physiological role of BioH is to remove the methyl group introduced by BioC when the pimeloyl moiety is complete. It allows to synthesize pimeloyl-ACP via the fatty acid synthetic pathway through the hydrolysis of the ester bonds of pimeloyl-ACP esters. This chain is Pimeloyl-[acyl-carrier protein] methyl ester esterase, found in Neisseria meningitidis serogroup A / serotype 4A (strain DSM 15465 / Z2491).